The following is a 688-amino-acid chain: NADPH-dependent diflavin oxidoreductase 1 (688 aa).

Residues 26-76 are disordered; it reads HLHRHADTSPTNQHNTSHKMTTTEPIHVTTGSGESRDHTEPRHVTPTSPNA. Residues 33–58 are compositionally biased toward polar residues; it reads TSPTNQHNTSHKMTTTEPIHVTTGSG. Basic and acidic residues predominate over residues 59–68; sequence ESRDHTEPRH. The 146-residue stretch at 82-227 folds into the Flavodoxin-like domain; that stretch reads ITIAYATETG…MYNEWQARFC (146 aa). Residues 88 to 93, 136 to 139, 174 to 183, and D209 each bind FMN; these read TETGNA, STTG, and LGDSSYPRFN. The region spanning 277 to 543 is the FAD-binding FR-type domain; that stretch reads KDVLQGTVVG…KHSTPIPDLD (267 aa). Residues R453, 483–486, and 515–518 each bind FAD; these read RLFS and GVLT. Residues T554, 607 to 608, and 613 to 617 each bind NADP(+); these read SR and GGYVQ. W688 is an FAD binding site.

Belongs to the NADPH-dependent diflavin oxidoreductase NDOR1 family. It in the N-terminal section; belongs to the flavodoxin family. The protein in the C-terminal section; belongs to the flavoprotein pyridine nucleotide cytochrome reductase family. In terms of assembly, interacts with DRE2; as part of the cytosolic iron-sulfur (Fe-S) protein assembly (CIA) machinery. FAD is required as a cofactor. FMN serves as cofactor.

The protein resides in the cytoplasm. Its subcellular location is the mitochondrion. It carries out the reaction 2 oxidized [2Fe-2S]-[protein] + NADPH = 2 reduced [2Fe-2S]-[protein] + NADP(+) + H(+). Its function is as follows. NADPH-dependent reductase which is a central component of the cytosolic iron-sulfur (Fe-S) protein assembly (CIA) machinery. Transfers electrons from NADPH via its FAD and FMN prosthetic groups to the [2Fe-2S] cluster of DRE2, another key component of the CIA machinery. In turn, this reduced cluster provides electrons for assembly of cytosolic iron-sulfur cluster proteins. Positively controls H(2)O(2)-induced cell death. The sequence is that of NADPH-dependent diflavin oxidoreductase 1 from Yarrowia lipolytica (strain CLIB 122 / E 150) (Yeast).